Here is a 206-residue protein sequence, read N- to C-terminus: Large ribosomal subunit protein uL4 (206 aa).

A disordered region spans residues 44–77 (RQGTRAQKDRQTVKHSTKKPWRQKGTGRARAGMT). Residues 56 to 70 (VKHSTKKPWRQKGTG) are compositionally biased toward basic residues.

The protein belongs to the universal ribosomal protein uL4 family. As to quaternary structure, part of the 50S ribosomal subunit.

One of the primary rRNA binding proteins, this protein initially binds near the 5'-end of the 23S rRNA. It is important during the early stages of 50S assembly. It makes multiple contacts with different domains of the 23S rRNA in the assembled 50S subunit and ribosome. Functionally, forms part of the polypeptide exit tunnel. This Methylibium petroleiphilum (strain ATCC BAA-1232 / LMG 22953 / PM1) protein is Large ribosomal subunit protein uL4.